Consider the following 553-residue polypeptide: Protein DA1-related 1 (553 aa).

A disordered region spans residues 10-41; it reads GSSHKFSDGQCNGRYREDRNLEGPRYSAEGSD. Positions 42–61 constitute a UIM 1 domain; the sequence is FDKEEIECAIALSLSEQEHV. Residues 62–77 show a composition bias toward basic and acidic residues; it reads IPQDDKGKKIIEYKSE. A disordered region spans residues 62 to 91; the sequence is IPQDDKGKKIIEYKSETEEDDDDDEDEDEE. Acidic residues predominate over residues 78-91; it reads TEEDDDDDEDEDEE. The UIM 2 domain occupies 87 to 106; that stretch reads DEDEEYMRAQLEAAEEEERR. A UIM 3; degenerate domain is found at 122–141; it reads AQLEETEKLLAKARLEEEEM. The UIM 4 domain maps to 149-168; that stretch reads EEDELLAKALQESMNVGSPP. At Ser166 the chain carries Phosphoserine. The LIM zinc-binding domain occupies 188 to 248; the sequence is RICVGCQAEI…KLCYKEQHHP (61 aa).

As to quaternary structure, interacts with ubiquitin, TCP14 and TCP15. In terms of processing, polyubiquitinated by DA2.

Acts redundantly with DA1 and DAR2 to regulate endoreduplication during leaf development. Together with DA1 and DAR2, modulates the protein stability of the transcription factors TCP14 and TCP15, which repress endoreduplication by directly regulating the expression of cell-cycle genes. This chain is Protein DA1-related 1, found in Arabidopsis thaliana (Mouse-ear cress).